The chain runs to 409 residues: Nucleoprotein (409 aa).

Disordered stretches follow at residues 1–32 (MASGKATGKTDAPAPVIKLGGPKPPKVGSSGN), 44–69 (LNSPQPKFEGSGVPDNENLKTSQQHG), 121–145 (ADVKSRSNQGTRDPDKFDQYPLRFS), 164–195 (RSGRSTAASSAASSRAPSRDGSRGRRSGSEGD), and 238–259 (VDQVFGPRTKGKEGNFGDDKMN). Residues 15 to 31 (PVIKLGGPKPPKVGSSG) show a composition bias toward low complexity. Residues 29 to 160 (SSGNASWFQA…GNFRWDFIPL (132 aa)) are RNA-binding. The region spanning 31 to 156 (GNASWFQAIK…GGPDGNFRWD (126 aa)) is the CoV N NTD domain. The span at 164-179 (RSGRSTAASSAASSRA) shows a compositional bias: low complexity. 2 stretches are compositionally biased toward basic and acidic residues: residues 180–192 (PSRDGSRGRRSGS) and 247–259 (KGKEGNFGDDKMN). Serine 190 and serine 192 each carry phosphoserine; by host. A CoV N CTD domain is found at 215 to 331 (TKAKADEMAH…QCVDGVGTRP (117 aa)). The tract at residues 226-333 (RYCKRTIPPG…VDGVGTRPKD (108 aa)) is dimerization. Cysteine 320 and cysteine 323 are disulfide-bonded. The disordered stretch occupies residues 326-409 (GVGTRPKDDE…GDSALGENEL (84 aa)). Positions 341–358 (RSSSRPATRTSSPALRQQ) are enriched in low complexity. A compositionally biased stretch (basic and acidic residues) spans 368–384 (KQDDEVDKALTSDEERN). Residue threonine 378 is modified to Phosphothreonine; by host. Phosphoserine; by host is present on serine 379.

This sequence belongs to the gammacoronavirus nucleocapsid protein family. Homooligomer. Both monomeric and oligomeric forms interact with RNA. Interacts with protein M. Interacts with NSP3; this interaction serves to tether the genome to the newly translated replicase-transcriptase complex at a very early stage of infection. In terms of processing, ADP-ribosylated. The ADP-ribosylation is retained in the virion during infection. Post-translationally, phosphorylated on serine and threonine residues.

It localises to the virion. It is found in the host endoplasmic reticulum-Golgi intermediate compartment. The protein localises to the host Golgi apparatus. Packages the positive strand viral genome RNA into a helical ribonucleocapsid (RNP) and plays a fundamental role during virion assembly through its interactions with the viral genome and membrane protein M. Plays an important role in enhancing the efficiency of subgenomic viral RNA transcription as well as viral replication. The sequence is that of Nucleoprotein from Gallus gallus (Chicken).